The chain runs to 178 residues: Cell division protein SepF (178 aa).

A compositionally biased stretch (basic and acidic residues) spans 19–45 (EHYESEHHTPHKDEDDSMEHDREERRA). The disordered stretch occupies residues 19–65 (EHYESEHHTPHKDEDDSMEHDREERRAPAPVREIARETPTPHAAEEE).

Belongs to the SepF family. In terms of assembly, homodimer. Interacts with FtsZ.

It localises to the cytoplasm. Functionally, cell division protein that is part of the divisome complex and is recruited early to the Z-ring. Probably stimulates Z-ring formation, perhaps through the cross-linking of FtsZ protofilaments. Its function overlaps with FtsA. In Arthrobacter sp. (strain FB24), this protein is Cell division protein SepF.